The following is a 315-amino-acid chain: Olfactory receptor 10A4 (315 aa).

Residues 1–26 lie on the Extracellular side of the membrane; sequence MMWENWTIVSEFVLVSFSALSTELQA. N5 carries N-linked (GlcNAc...) asparagine glycosylation. A helical transmembrane segment spans residues 27–47; that stretch reads LLFLLFLTIYLVTLMGNVLII. Topologically, residues 48-55 are cytoplasmic; that stretch reads LVTIADSA. Residues 56-76 traverse the membrane as a helical segment; it reads LQSPMYFFLRNLSFLEIGFNL. Residues 77–100 lie on the Extracellular side of the membrane; sequence VIVPKMLGTLIIQDTTISFLGCAT. Cysteines 98 and 190 form a disulfide. A helical membrane pass occupies residues 101–121; it reads QMYFFFFFGAAECCLLATMAY. Over 122 to 140 the chain is Cytoplasmic; sequence DRYVAICDPLHYPVIMGHI. Residues 141-161 form a helical membrane-spanning segment; the sequence is SCAQLAAASWFSGFSVATVQT. Topologically, residues 162 to 198 are extracellular; it reads TWIFSFPFCGPNRVNHFFCDSPPVIALVCADTSVFEL. The helical transmembrane segment at 199–218 threads the bilayer; the sequence is EALTATVLFILFPFLLILGS. Topologically, residues 219–238 are cytoplasmic; it reads YVRILSTIFRMPSAEGKHQA. Residues 239–259 form a helical membrane-spanning segment; the sequence is FSTCSAHLLVVSLFYSTAILT. The Extracellular segment spans residues 260–272; that stretch reads YFRPQSSASSESK. Residues 273 to 293 traverse the membrane as a helical segment; the sequence is KLLSLSSTVVTPMLNPIIYSS. Residues 294 to 315 lie on the Cytoplasmic side of the membrane; it reads RNKEVKAALKRLIHRTLGSQKL.

The protein belongs to the G-protein coupled receptor 1 family. In terms of tissue distribution, expressed in the tongue.

It localises to the cell membrane. Functionally, odorant receptor (Potential). May be involved in taste perception. This chain is Olfactory receptor 10A4 (OR10A4), found in Homo sapiens (Human).